We begin with the raw amino-acid sequence, 312 residues long: Ribonuclease Z (312 aa).

Positions 63, 65, 67, 68, 141, 212, and 270 each coordinate Zn(2+). Residue Asp67 is the Proton acceptor of the active site.

Belongs to the RNase Z family. In terms of assembly, homodimer. Zn(2+) serves as cofactor.

The enzyme catalyses Endonucleolytic cleavage of RNA, removing extra 3' nucleotides from tRNA precursor, generating 3' termini of tRNAs. A 3'-hydroxy group is left at the tRNA terminus and a 5'-phosphoryl group is left at the trailer molecule.. Zinc phosphodiesterase, which displays some tRNA 3'-processing endonuclease activity. Probably involved in tRNA maturation, by removing a 3'-trailer from precursor tRNA. The polypeptide is Ribonuclease Z (Lactobacillus acidophilus (strain ATCC 700396 / NCK56 / N2 / NCFM)).